A 467-amino-acid polypeptide reads, in one-letter code: MTMLFVIFSGLTSMTSRLVNSMSKHMFTVASMLMAMPTLYDWEEIDVYYTSDGMADVLMLLTMYMLPLSMISNWNNMKSTLYFELVLNLGMMLLINFMCQDMTSFYMYFEASLAPLFMLMGLYGAANRDKAADYVLMYTLFSSLFMLLAMALYEVMLDNTDYQATSLLVLSLDLQCMLFLAMSMGIAVKTPLAPLHTWLPVVHSESPLAGSMLLAGMILKLAVFAMIRLILPTLSDASVTYTPFVYVMCVMTMMYTSIITLRQTDLKVIIAYSSISHMAVCMLGMLSNTMTGITGSLVLCIAHGFVSPGLFMMVGGMLYDRYHNRLMYYFQGLISYMPYLSVYFMMLSFCNMGTPLSINFIGEMLSLTGAINRAPVLGAMAALSVLLSACYQMKLTNRLTGGIKTPYMSLTSDCTYRETVLMITLIVPTMFLGFFPSWVMDFLWDAPNLLYMFMVYRTFIKMSIPWL.

The next 13 membrane-spanning stretches (helical) occupy residues 21-40 (SMSK…PTLY), 54-74 (MADV…ISNW), 79-99 (STLY…NFMC), 105-125 (FYMY…LYGA), 135-155 (VLMY…LYEV), 168-188 (LVLS…GIAV), 207-227 (PLAG…FAMI), 239-259 (VTYT…TSII), 266-286 (LKVI…LGML), 297-317 (LVLC…VGGM), 330-350 (FQGL…LSFC), 367-387 (LTGA…SVLL), and 420-440 (VLMI…SWVM).

The protein belongs to the complex I subunit 4 family.

It localises to the mitochondrion membrane. The enzyme catalyses a ubiquinone + NADH + 5 H(+)(in) = a ubiquinol + NAD(+) + 4 H(+)(out). Functionally, core subunit of the mitochondrial membrane respiratory chain NADH dehydrogenase (Complex I) that is believed to belong to the minimal assembly required for catalysis. Complex I functions in the transfer of electrons from NADH to the respiratory chain. The immediate electron acceptor for the enzyme is believed to be ubiquinone. In Debaryomyces hansenii (strain ATCC 36239 / CBS 767 / BCRC 21394 / JCM 1990 / NBRC 0083 / IGC 2968) (Yeast), this protein is NADH-ubiquinone oxidoreductase chain 4 (ND4).